Consider the following 485-residue polypeptide: NADH-quinone oxidoreductase subunit N (485 aa).

A run of 14 helical transmembrane segments spans residues 8–28 (LIAL…MLSI), 35–55 (FLNA…LWFV), 71–91 (GFAM…CTFA), 105–125 (FYLL…ANHL), 127–147 (ALFL…GYAF), 159–179 (YTIL…LVYA), 203–223 (LLAG…LVPF), 235–255 (PAPV…GVVM), 271–291 (VVLG…ALSQ), 297–317 (LLGY…IVLQ), 326–346 (VGVY…VVSL), 373–393 (AAVM…LGFI), 408–430 (WWLV…RVAV), and 455–475 (IVVL…QPLI).

Belongs to the complex I subunit 2 family. As to quaternary structure, NDH-1 is composed of 13 different subunits. Subunits NuoA, H, J, K, L, M, N constitute the membrane sector of the complex.

The protein resides in the cell inner membrane. The enzyme catalyses a quinone + NADH + 5 H(+)(in) = a quinol + NAD(+) + 4 H(+)(out). NDH-1 shuttles electrons from NADH, via FMN and iron-sulfur (Fe-S) centers, to quinones in the respiratory chain. The immediate electron acceptor for the enzyme in this species is believed to be ubiquinone. Couples the redox reaction to proton translocation (for every two electrons transferred, four hydrogen ions are translocated across the cytoplasmic membrane), and thus conserves the redox energy in a proton gradient. This chain is NADH-quinone oxidoreductase subunit N, found in Salmonella choleraesuis (strain SC-B67).